Reading from the N-terminus, the 254-residue chain is 3-deoxy-manno-octulosonate cytidylyltransferase (254 aa).

The protein belongs to the KdsB family.

It localises to the cytoplasm. It carries out the reaction 3-deoxy-alpha-D-manno-oct-2-ulosonate + CTP = CMP-3-deoxy-beta-D-manno-octulosonate + diphosphate. Its pathway is nucleotide-sugar biosynthesis; CMP-3-deoxy-D-manno-octulosonate biosynthesis; CMP-3-deoxy-D-manno-octulosonate from 3-deoxy-D-manno-octulosonate and CTP: step 1/1. It participates in bacterial outer membrane biogenesis; lipopolysaccharide biosynthesis. Its function is as follows. Activates KDO (a required 8-carbon sugar) for incorporation into bacterial lipopolysaccharide in Gram-negative bacteria. This Pseudomonas syringae pv. tomato (strain ATCC BAA-871 / DC3000) protein is 3-deoxy-manno-octulosonate cytidylyltransferase.